The primary structure comprises 122 residues: Small ribosomal subunit protein uS13 (122 aa).

A disordered region spans residues 95 to 122 (SLPVRGQRTHTNARTRKGPAKSIAGKKK).

The protein belongs to the universal ribosomal protein uS13 family. As to quaternary structure, part of the 30S ribosomal subunit. Forms a loose heterodimer with protein S19. Forms two bridges to the 50S subunit in the 70S ribosome.

Located at the top of the head of the 30S subunit, it contacts several helices of the 16S rRNA. In the 70S ribosome it contacts the 23S rRNA (bridge B1a) and protein L5 of the 50S subunit (bridge B1b), connecting the 2 subunits; these bridges are implicated in subunit movement. Contacts the tRNAs in the A and P-sites. This is Small ribosomal subunit protein uS13 from Mesorhizobium japonicum (strain LMG 29417 / CECT 9101 / MAFF 303099) (Mesorhizobium loti (strain MAFF 303099)).